We begin with the raw amino-acid sequence, 560 residues long: Potassium-transporting ATPase potassium-binding subunit (560 aa).

12 consecutive transmembrane segments (helical) span residues 11 to 31 (IFLLLIVIAVPLGKYLYVAFF), 63 to 83 (SYCTALLIVNAALLGISYGLL), 134 to 154 (FVTMMMFTSAATGLTVATALI), 179 to 199 (LLPLSVIVTILLVAFGVPQTF), 254 to 274 (VIEMLSMWCIPAALPFTYGHA), 282 to 302 (WVLFATMFVLFVMMLGVVYNA), 329 to 349 (FGIPLSSLFTAITTAATTGSV), 356 to 376 (LTPIGGLVPLALMMLNNVFGG), 379 to 399 (VGFVNIMMYAMIAVFLSGLMV), 417 to 437 (LIVIALLLHPLIILAPSAIAL), 488 to 508 (VVMLLGRYVSIIAMLAVAGSL), and 530 to 550 (VILFGTVFIIGALTFFPVLIL).

Belongs to the KdpA family. In terms of assembly, the system is composed of three essential subunits: KdpA, KdpB and KdpC.

It is found in the cell membrane. In terms of biological role, part of the high-affinity ATP-driven potassium transport (or Kdp) system, which catalyzes the hydrolysis of ATP coupled with the electrogenic transport of potassium into the cytoplasm. This subunit binds the extracellular potassium ions and delivers the ions to the membrane domain of KdpB through an intramembrane tunnel. The sequence is that of Potassium-transporting ATPase potassium-binding subunit from Geobacillus kaustophilus (strain HTA426).